A 289-amino-acid polypeptide reads, in one-letter code: Diaminopimelate epimerase (289 aa).

Substrate contacts are provided by Asn-11 and Asn-78. Cys-87 functions as the Proton donor in the catalytic mechanism. Residues 88 to 89 (GN), Asn-163, Asn-199, and 217 to 218 (ER) each bind substrate. Catalysis depends on Cys-226, which acts as the Proton acceptor. A substrate-binding site is contributed by 227–228 (GT).

The protein belongs to the diaminopimelate epimerase family. Homodimer.

The protein localises to the cytoplasm. It carries out the reaction (2S,6S)-2,6-diaminopimelate = meso-2,6-diaminopimelate. Its pathway is amino-acid biosynthesis; L-lysine biosynthesis via DAP pathway; DL-2,6-diaminopimelate from LL-2,6-diaminopimelate: step 1/1. In terms of biological role, catalyzes the stereoinversion of LL-2,6-diaminopimelate (L,L-DAP) to meso-diaminopimelate (meso-DAP), a precursor of L-lysine and an essential component of the bacterial peptidoglycan. In Mycolicibacterium gilvum (strain PYR-GCK) (Mycobacterium gilvum (strain PYR-GCK)), this protein is Diaminopimelate epimerase.